Here is a 1012-residue protein sequence, read N- to C-terminus: Alanine--tRNA ligase, mitochondrial (1012 aa).

Residues 1–24 (MYNSAKQLQRVLTAREIRKTFLDH) constitute a mitochondrion transit peptide. His656, His660, Cys766, and His770 together coordinate Zn(2+).

The protein belongs to the class-II aminoacyl-tRNA synthetase family. Monomer. Zn(2+) serves as cofactor.

Its subcellular location is the mitochondrion. The enzyme catalyses tRNA(Ala) + L-alanine + ATP = L-alanyl-tRNA(Ala) + AMP + diphosphate. Catalyzes the attachment of alanine to tRNA(Ala) in a two-step reaction: alanine is first activated by ATP to form Ala-AMP and then transferred to the acceptor end of tRNA(Ala). Also edits incorrectly charged tRNA(Ala) via its editing domain. In Drosophila melanogaster (Fruit fly), this protein is Alanine--tRNA ligase, mitochondrial.